The primary structure comprises 875 residues: GATOR2 complex protein MIOS (875 aa).

WD repeat units lie at residues 61–100 (PYMK…NSKF), 111–155 (KHAR…TPDI), 182–221 (GQND…QKMF), 223–261 (NTKA…KPVL), 265–306 (EQPK…TPIG), and 395–437 (RLRA…KQYT). Residues 735–781 (VSCNFCGKSISYSCSAVPHQGRGFSQYGVSGSPTKSKVTSCPGCRKP) form a C4-type zinc finger. Residues cysteine 737 and cysteine 740 each coordinate Zn(2+). 2 positions are modified to phosphoserine: serine 759 and serine 766. Zn(2+) is bound by residues cysteine 775, cysteine 778, cysteine 788, cysteine 827, cysteine 830, histidine 832, histidine 835, histidine 838, cysteine 849, cysteine 854, and cysteine 858. The segment at 782–863 (LPRCALCLIN…CTCKCMQLDT (82 aa)) adopts an RING-type; atypical zinc-finger fold.

It belongs to the WD repeat mio family. As to quaternary structure, component of the GATOR2 subcomplex, composed of MIOS, SEC13, SEH1L, WDR24 and WDR59. The GATOR2 complex interacts with CASTOR1 and CASTOR2; the interaction is negatively regulated by arginine. CASTOR1 and CASTOR2 convey leucine availability via direct interaction with MIOS. The GATOR2 complex interacts with SESN1, SESN2 and SESN3; the interaction is negatively regulated by amino acids. Interacts with SAR1A and SAR1B; the interaction is direct, disrupted by leucine and mediates the interaction of SAR1A or SAR1B with the GATOR2 complex to negatively regulate the TORC1 signaling upon leucine deprivation.

Its subcellular location is the lysosome membrane. Its activity is regulated as follows. The GATOR2 complex is negatively regulated by the upstream amino acid sensors CASTOR1 and SESN2, which sequester the GATOR2 complex in absence of amino acids. In the presence of abundant amino acids, GATOR2 is released from CASTOR1 and SESN2 and activated. In terms of biological role, as a component of the GATOR2 complex, functions as an activator of the amino acid-sensing branch of the mTORC1 signaling pathway. The GATOR2 complex indirectly activates mTORC1 through the inhibition of the GATOR1 subcomplex. GATOR2 probably acts as an E3 ubiquitin-protein ligase toward GATOR1. In the presence of abundant amino acids, the GATOR2 complex mediates ubiquitination of the NPRL2 core component of the GATOR1 complex, leading to GATOR1 inactivation. In the absence of amino acids, GATOR2 is inhibited, activating the GATOR1 complex. Within the GATOR2 complex, MIOS is required to prevent autoubiquitination of WDR24, the catalytic subunit of the complex. The GATOR2 complex is required for brain myelination. This chain is GATOR2 complex protein MIOS, found in Pongo abelii (Sumatran orangutan).